The sequence spans 384 residues: N-acetylneuraminate epimerase (384 aa).

The first 29 residues, 1–29, serve as a signal peptide directing secretion; sequence MGMQMKNFKKMMTLMALCLSVAITTSGYA. Kelch repeat units follow at residues 51–95, 97–149, 151–184, 185–230, 233–282, 304–353, and 355–384; these read VIYV…VFLN, ELYV…VKLN, TMVL…KVIY, NYFN…VMEN, LMLI…LAGA, QNYT…SYGD, and VFLI…LLIK. E239 serves as the catalytic Proton acceptor.

It belongs to the NanM family. In terms of assembly, homodimer.

The protein localises to the periplasm. It catalyses the reaction N-acetyl-alpha-neuraminate = N-acetyl-beta-neuraminate. Its function is as follows. Converts alpha-N-acetylneuranimic acid (Neu5Ac) to the beta-anomer, accelerating the equilibrium between the alpha- and beta-anomers. Probably facilitates sialidase-negative bacteria to compete successfully for limited amounts of extracellular Neu5Ac, which is likely taken up in the beta-anomer. In addition, the rapid removal of sialic acid from solution might be advantageous to the bacterium to damp down host responses. This is N-acetylneuraminate epimerase from Salmonella enteritidis PT4 (strain P125109).